We begin with the raw amino-acid sequence, 127 residues long: Aspartate 1-decarboxylase (127 aa).

The active-site Schiff-base intermediate with substrate; via pyruvic acid is the S25. Pyruvic acid (Ser) is present on S25. A substrate-binding site is contributed by T57. Y58 (proton donor) is an active-site residue. 73 to 75 contributes to the substrate binding site; sequence GSA.

The protein belongs to the PanD family. As to quaternary structure, heterooctamer of four alpha and four beta subunits. The cofactor is pyruvate. In terms of processing, is synthesized initially as an inactive proenzyme, which is activated by self-cleavage at a specific serine bond to produce a beta-subunit with a hydroxyl group at its C-terminus and an alpha-subunit with a pyruvoyl group at its N-terminus.

It localises to the cytoplasm. The enzyme catalyses L-aspartate + H(+) = beta-alanine + CO2. It participates in cofactor biosynthesis; (R)-pantothenate biosynthesis; beta-alanine from L-aspartate: step 1/1. Its function is as follows. Catalyzes the pyruvoyl-dependent decarboxylation of aspartate to produce beta-alanine. The polypeptide is Aspartate 1-decarboxylase (Laribacter hongkongensis (strain HLHK9)).